We begin with the raw amino-acid sequence, 1410 residues long: DNA-directed RNA polymerase subunit beta' (1410 aa).

Positions 70, 72, 85, and 88 each coordinate Zn(2+). Positions 460, 462, and 464 each coordinate Mg(2+). Zn(2+) contacts are provided by Cys-814, Cys-888, Cys-895, and Cys-898.

It belongs to the RNA polymerase beta' chain family. The RNAP catalytic core consists of 2 alpha, 1 beta, 1 beta' and 1 omega subunit. When a sigma factor is associated with the core the holoenzyme is formed, which can initiate transcription. It depends on Mg(2+) as a cofactor. Zn(2+) is required as a cofactor.

The enzyme catalyses RNA(n) + a ribonucleoside 5'-triphosphate = RNA(n+1) + diphosphate. Its function is as follows. DNA-dependent RNA polymerase catalyzes the transcription of DNA into RNA using the four ribonucleoside triphosphates as substrates. This Buchnera aphidicola subsp. Cinara cedri (strain Cc) protein is DNA-directed RNA polymerase subunit beta'.